The following is a 142-amino-acid chain: Transcriptional regulator MraZ (142 aa).

SpoVT-AbrB domains follow at residues 5-48 and 77-120; these read EFEY…PLCE and AFDV…DKET.

It belongs to the MraZ family. Forms oligomers.

The protein localises to the cytoplasm. Its subcellular location is the nucleoid. In Dehalococcoides mccartyi (strain ATCC BAA-2100 / JCM 16839 / KCTC 5957 / BAV1), this protein is Transcriptional regulator MraZ.